The chain runs to 126 residues: Ribulose bisphosphate carboxylase small subunit, chloroplastic 1 (126 aa).

The protein belongs to the RuBisCO small chain family. As to quaternary structure, heterohexadecamer of 8 large and 8 small subunits.

It is found in the plastid. Its subcellular location is the chloroplast. RuBisCO catalyzes two reactions: the carboxylation of D-ribulose 1,5-bisphosphate, the primary event in carbon dioxide fixation, as well as the oxidative fragmentation of the pentose substrate. Both reactions occur simultaneously and in competition at the same active site. Although the small subunit is not catalytic it is essential for maximal activity. In Acetabularia peniculus (Green alga), this protein is Ribulose bisphosphate carboxylase small subunit, chloroplastic 1.